The chain runs to 178 residues: Single-stranded DNA-binding protein 2 (178 aa).

Positions 6-111 (VNKVILVGNL…VVVSQSGTMQ (106 aa)) constitute an SSB domain. A DNA-binding region spans residues 55-61 (WHRVVLY). Residues 111 to 161 (QMLGGRNSAGSGQQQGGWGQPQQPAAPSHSGMPPQQHPANEPPMDFDDDIP) are disordered.

Homotetramer.

The sequence is that of Single-stranded DNA-binding protein 2 (ssb2) from Salmonella typhi.